Here is a 376-residue protein sequence, read N- to C-terminus: PqqA peptide cyclase (376 aa).

The 216-residue stretch at 7 to 222 folds into the Radical SAM core domain; the sequence is VGLPLWLLAE…TNEYRDKLKA (216 aa). Positions 21, 25, and 28 each coordinate [4Fe-4S] cluster.

This sequence belongs to the radical SAM superfamily. PqqE family. Interacts with PqqD. The interaction is necessary for activity of PqqE. [4Fe-4S] cluster serves as cofactor.

It catalyses the reaction [PQQ precursor protein] + S-adenosyl-L-methionine = E-Y cross-linked-[PQQ precursor protein] + 5'-deoxyadenosine + L-methionine + H(+). The protein operates within cofactor biosynthesis; pyrroloquinoline quinone biosynthesis. In terms of biological role, catalyzes the cross-linking of a glutamate residue and a tyrosine residue in the PqqA protein as part of the biosynthesis of pyrroloquinoline quinone (PQQ). The chain is PqqA peptide cyclase from Pseudomonas putida (strain ATCC 700007 / DSM 6899 / JCM 31910 / BCRC 17059 / LMG 24140 / F1).